The chain runs to 423 residues: 3-phosphoshikimate 1-carboxyvinyltransferase (423 aa).

Residues K21, S22, and R26 each coordinate 3-phosphoshikimate. Phosphoenolpyruvate is bound at residue K21. Phosphoenolpyruvate contacts are provided by G92 and R120. 4 residues coordinate 3-phosphoshikimate: S164, Q166, D312, and K339. Position 166 (Q166) interacts with phosphoenolpyruvate. The active-site Proton acceptor is D312. 2 residues coordinate phosphoenolpyruvate: R343 and R385.

This sequence belongs to the EPSP synthase family. As to quaternary structure, monomer.

The protein resides in the cytoplasm. The catalysed reaction is 3-phosphoshikimate + phosphoenolpyruvate = 5-O-(1-carboxyvinyl)-3-phosphoshikimate + phosphate. Its pathway is metabolic intermediate biosynthesis; chorismate biosynthesis; chorismate from D-erythrose 4-phosphate and phosphoenolpyruvate: step 6/7. Its function is as follows. Catalyzes the transfer of the enolpyruvyl moiety of phosphoenolpyruvate (PEP) to the 5-hydroxyl of shikimate-3-phosphate (S3P) to produce enolpyruvyl shikimate-3-phosphate and inorganic phosphate. The protein is 3-phosphoshikimate 1-carboxyvinyltransferase of Thermoanaerobacter pseudethanolicus (strain ATCC 33223 / 39E) (Clostridium thermohydrosulfuricum).